The sequence spans 374 residues: Homoserine O-succinyltransferase (374 aa).

The AB hydrolase-1 domain maps to 47 to 357; it reads NAILVCHALS…NFGHDSFLME (311 aa). Catalysis depends on serine 153, which acts as the Nucleophile. Residue arginine 223 coordinates substrate. Catalysis depends on residues aspartate 318 and histidine 351. Aspartate 352 is a binding site for substrate.

The protein belongs to the AB hydrolase superfamily. MetX family. As to quaternary structure, homodimer.

Its subcellular location is the cytoplasm. The enzyme catalyses L-homoserine + succinyl-CoA = O-succinyl-L-homoserine + CoA. It functions in the pathway amino-acid biosynthesis; L-methionine biosynthesis via de novo pathway; O-succinyl-L-homoserine from L-homoserine: step 1/1. Functionally, transfers a succinyl group from succinyl-CoA to L-homoserine, forming succinyl-L-homoserine. This is Homoserine O-succinyltransferase from Dechloromonas aromatica (strain RCB).